We begin with the raw amino-acid sequence, 199 residues long: MTEPNRVAEVRRDTAETKIRVRVDLDGTGVARLATGIGFFDHMLDQLARHGLVDLEIEADGDLHIDGHHTVEDVGITLGQAFAKAVGDKKGLRRYGHAYVPLDEALSRVVVDFSGRPGLHMRVPFKAGMIGALDTQLVYEFFQGFVNHAGVTLHIDNLHGDNAHHQCETVFKAFARALRMALERDPRMAGVIPSTKGSL.

This sequence belongs to the imidazoleglycerol-phosphate dehydratase family.

It is found in the cytoplasm. It catalyses the reaction D-erythro-1-(imidazol-4-yl)glycerol 3-phosphate = 3-(imidazol-4-yl)-2-oxopropyl phosphate + H2O. The protein operates within amino-acid biosynthesis; L-histidine biosynthesis; L-histidine from 5-phospho-alpha-D-ribose 1-diphosphate: step 6/9. The sequence is that of Imidazoleglycerol-phosphate dehydratase from Methylibium petroleiphilum (strain ATCC BAA-1232 / LMG 22953 / PM1).